The sequence spans 388 residues: Chorismate synthase (388 aa).

R39 and R45 together coordinate NADP(+). FMN-binding positions include 130–132 (RSS), 251–252 (NA), G296, 311–315 (KPIPT), and R337.

The protein belongs to the chorismate synthase family. As to quaternary structure, homotetramer. FMNH2 is required as a cofactor.

The enzyme catalyses 5-O-(1-carboxyvinyl)-3-phosphoshikimate = chorismate + phosphate. The protein operates within metabolic intermediate biosynthesis; chorismate biosynthesis; chorismate from D-erythrose 4-phosphate and phosphoenolpyruvate: step 7/7. Functionally, catalyzes the anti-1,4-elimination of the C-3 phosphate and the C-6 proR hydrogen from 5-enolpyruvylshikimate-3-phosphate (EPSP) to yield chorismate, which is the branch point compound that serves as the starting substrate for the three terminal pathways of aromatic amino acid biosynthesis. This reaction introduces a second double bond into the aromatic ring system. The polypeptide is Chorismate synthase (Streptococcus agalactiae serotype V (strain ATCC BAA-611 / 2603 V/R)).